A 204-amino-acid polypeptide reads, in one-letter code: Large ribosomal subunit protein eL15 (204 aa).

This sequence belongs to the eukaryotic ribosomal protein eL15 family. In terms of assembly, component of the large ribosomal subunit.

It localises to the cytoplasm. Its function is as follows. Component of the large ribosomal subunit. The ribosome is a large ribonucleoprotein complex responsible for the synthesis of proteins in the cell. The chain is Large ribosomal subunit protein eL15 (rpl15) from Mylopharyngodon piceus (Black carp).